The primary structure comprises 432 residues: Anaerobic glycerol-3-phosphate dehydrogenase subunit B (432 aa).

Belongs to the anaerobic G-3-P dehydrogenase subunit B family. In terms of assembly, composed of a catalytic GlpA/B dimer and of membrane bound GlpC. The cofactor is FMN.

It catalyses the reaction a quinone + sn-glycerol 3-phosphate = dihydroxyacetone phosphate + a quinol. Its pathway is polyol metabolism; glycerol degradation via glycerol kinase pathway; glycerone phosphate from sn-glycerol 3-phosphate (anaerobic route): step 1/1. Conversion of glycerol 3-phosphate to dihydroxyacetone. Uses fumarate or nitrate as electron acceptor. The chain is Anaerobic glycerol-3-phosphate dehydrogenase subunit B from Haemophilus influenzae (strain 86-028NP).